The chain runs to 274 residues: Rhamnulose-1-phosphate aldolase (274 aa).

Glu117 is an active-site residue. Zn(2+) contacts are provided by His141, His143, and His212.

Belongs to the aldolase class II family. RhaD subfamily. In terms of assembly, homotetramer. The cofactor is Zn(2+).

The protein localises to the cytoplasm. The enzyme catalyses L-rhamnulose 1-phosphate = (S)-lactaldehyde + dihydroxyacetone phosphate. The protein operates within carbohydrate degradation; L-rhamnose degradation; glycerone phosphate from L-rhamnose: step 3/3. Functionally, catalyzes the reversible cleavage of L-rhamnulose-1-phosphate to dihydroxyacetone phosphate (DHAP) and L-lactaldehyde. This Escherichia coli O45:K1 (strain S88 / ExPEC) protein is Rhamnulose-1-phosphate aldolase.